The sequence spans 699 residues: MSKINKLEHIRNIGICAHIDAGKTTTTERILYYTGKSHKIGEVHEGGATMDWMEQEQERGITITSAATTCRWQDKIINIIDTPGHVDFTIEVERSLRVLDGAVAVFDGVAGVEPQSETVWRQADKYNVPRMCFVNKMDRMGADFYRCVEMLKDRLGAKPLVIQLPVGIEENFKGIIDLIKMKAVIWKDEALGAEYFEEDIPADMKDKAEEYRAKLLDMVVELDDHVMEKYLSGEEVTAEEIKRLIRKGTISAAFYPVLCGSAFKNKGVQPLLDAVVDFLPSPIDIGIVKGMEVSTGEEKDFPISVTEPFAALAFKIMNDPFVGSLTFIRIYSGKIISGTTVINTVKNKREKIGRMLLMHANNREDIKEASAGDIVALAGLKDTTTGDTLSDIDQQVILERMEFPEPVIELAVEPKSTADQEKMGLALSRLAAEDPSFRVSTDYETGQTVIKGMGELHLEILIDRMRREFKVEANIGAPQVAYRETITKVCEIDYTHKKQSGGAGQFARVKIIFEPLKEVKDLKDEDKNKIFVFESKIVGGAVPKEYIPGVEKGLNNIRETGVIAGYPMIDFKATLVDGAFHDVDSSVLAFEIAAKAAFREGMPKGNPKLLEPIMQVEVITPDEYMGDIIGDLNSRRGQIQSMDPRGNAQVVTANVPLAEMFGYVNTLRSLSQGRAQFSMIFSHYDQVPSQVADIIKAKK.

In terms of domain architecture, tr-type G spans 8 to 283 (EHIRNIGICA…AVVDFLPSPI (276 aa)). Residues 17–24 (AHIDAGKT), 81–85 (DTPGH), and 135–138 (NKMD) contribute to the GTP site.

It belongs to the TRAFAC class translation factor GTPase superfamily. Classic translation factor GTPase family. EF-G/EF-2 subfamily.

The protein resides in the cytoplasm. In terms of biological role, catalyzes the GTP-dependent ribosomal translocation step during translation elongation. During this step, the ribosome changes from the pre-translocational (PRE) to the post-translocational (POST) state as the newly formed A-site-bound peptidyl-tRNA and P-site-bound deacylated tRNA move to the P and E sites, respectively. Catalyzes the coordinated movement of the two tRNA molecules, the mRNA and conformational changes in the ribosome. In Rickettsia africae (strain ESF-5), this protein is Elongation factor G.